The following is a 270-amino-acid chain: MTFIDQLNAAWQKNNSLLCVGLDPDPAKFPAHLKGRDDKIFEFCAAIVDATADLVCSFKPQIAYFAARRAEDQLEALIAHIHEKHPGIPVILDAKRGDIGSTAEQYAVEAFERFKADAVTVNPYMGRDSVDPYLAYPDKGVILLCRTSNPGGSDLQFLDVGGEKLYERVARLASGEWNSSGQISLVVGATFPAEIARVREIVGDVPLLVPGIGAQGGDIEATVRAGRTANGTGLMINSSRAILYAGKDERFAAAARQVALETRDAINLYR.

The active-site Proton donor is the Lys-95.

It belongs to the OMP decarboxylase family. Type 2 subfamily.

It catalyses the reaction orotidine 5'-phosphate + H(+) = UMP + CO2. The protein operates within pyrimidine metabolism; UMP biosynthesis via de novo pathway; UMP from orotate: step 2/2. The sequence is that of Orotidine 5'-phosphate decarboxylase from Dechloromonas aromatica (strain RCB).